Reading from the N-terminus, the 768-residue chain is Levansucrase (768 aa).

A signal peptide spans 1–36 (MLENKKHKKMSLSGKSLLMGTLSTAAIVLSASTVNA). Composition is skewed to polar residues over residues 57-68 (SASVNKNDNSGL), 80-99 (TETN…SQVN), 106-134 (SSTQ…QDSD), and 143-153 (NNSQGQSSTSS). The tract at residues 57-158 (SASVNKNDNS…SSTSSEKTEL (102 aa)) is disordered. Trp-250, Asp-251, and Ser-320 together coordinate sucrose. The active-site Nucleophile is the Asp-251. Asp-398 is a binding site for Ca(2+). Positions 403 and 404 each coordinate sucrose. Ca(2+)-binding residues include Gln-429, Asn-468, and Asp-502. Glu-503 contacts sucrose. The active-site Proton donor/acceptor is Glu-505. Position 523 (Arg-523) interacts with sucrose. The disordered stretch occupies residues 688 to 736 (HQPVTPNVPTTPEKPENPTTPNTPDTPRTPEVPTTPVKKTTQSELPKAG). The segment covering 691–727 (VTPNVPTTPEKPENPTTPNTPDTPRTPEVPTTPVKKT) has biased composition (low complexity). The LPXTG sorting signal signature appears at 732–736 (LPKAG). Ala-735 carries the post-translational modification Pentaglycyl murein peptidoglycan amidated alanine. The propeptide at 736–768 (GAKDGIAATILGAISSMLGVIGLAGISKRKRNN) is removed by sortase.

This sequence belongs to the glycosyl hydrolase 68 family.

Its subcellular location is the secreted. The protein resides in the cell wall. The protein localises to the cell surface. It carries out the reaction [6)-beta-D-fructofuranosyl-(2-&gt;](n) alpha-D-glucopyranoside + sucrose = [6)-beta-D-fructofuranosyl-(2-&gt;](n+1) alpha-D-glucopyranoside + D-glucose. With respect to regulation, calcium ions are required for optimal activity, but do not seem to be essential since addition of EDTA causes only a 48% drop in activity. Ca(2+) may play an important structural role and promote stability of levansucrase. Its function is as follows. Fructosyltransferase that catalyzes the polymerization of the fructose moiety of sucrose to produce levan polymer and the fructo-oligosaccharide (FOS) 1-kestose. Is also able to convert raffinose into a fructan polymer and a single oligosaccharide (most likely Gal-Glc-Frc-Frc) in vitro; however, L.gasseri strain DSM 20077 is unable to ferment raffinose. Also displays sucrose hydrolase activity. The protein is Levansucrase of Lactobacillus gasseri.